The primary structure comprises 636 residues: Translation factor GUF1, mitochondrial (636 aa).

In terms of domain architecture, tr-type G spans 35–218 (SNYRNFSIVA…AIIRDIPGPR (184 aa)). GTP is bound by residues 44 to 51 (AHVDHGKS), 111 to 115 (DTPGH), and 165 to 168 (NKID).

This sequence belongs to the TRAFAC class translation factor GTPase superfamily. Classic translation factor GTPase family. LepA subfamily.

Its subcellular location is the mitochondrion inner membrane. It catalyses the reaction GTP + H2O = GDP + phosphate + H(+). In terms of biological role, promotes mitochondrial protein synthesis. May act as a fidelity factor of the translation reaction, by catalyzing a one-codon backward translocation of tRNAs on improperly translocated ribosomes. Binds to mitochondrial ribosomes in a GTP-dependent manner. The sequence is that of Translation factor GUF1, mitochondrial from Debaryomyces hansenii (strain ATCC 36239 / CBS 767 / BCRC 21394 / JCM 1990 / NBRC 0083 / IGC 2968) (Yeast).